The sequence spans 334 residues: L-lactate dehydrogenase B chain (334 aa).

NAD(+) is bound by residues 30 to 58 and arginine 100; that span reads GQVG…MEDR. Positions 107, 139, and 170 each coordinate substrate. Residue asparagine 139 participates in NAD(+) binding. Histidine 194 acts as the Proton acceptor in catalysis. Threonine 249 contacts substrate.

The protein belongs to the LDH/MDH superfamily. LDH family. As to quaternary structure, homotetramer.

The protein resides in the cytoplasm. It carries out the reaction (S)-lactate + NAD(+) = pyruvate + NADH + H(+). It functions in the pathway fermentation; pyruvate fermentation to lactate; (S)-lactate from pyruvate: step 1/1. Functionally, interconverts simultaneously and stereospecifically pyruvate and lactate with concomitant interconversion of NADH and NAD(+). The protein is L-lactate dehydrogenase B chain (ldhb) of Fundulus heteroclitus (Killifish).